Here is a 452-residue protein sequence, read N- to C-terminus: Probable pectate lyase 9 (452 aa).

A signal peptide spans 1 to 25; it reads MATSSLKLTSACFVLLFIFVGCVLT. N-linked (GlcNAc...) asparagine glycosylation is found at Asn-88, Asn-139, Asn-214, and Asn-233. Residue Asp-250 participates in Ca(2+) binding. The N-linked (GlcNAc...) asparagine glycan is linked to Asn-271. Residues Asp-274 and Asp-278 each contribute to the Ca(2+) site. N-linked (GlcNAc...) asparagine glycans are attached at residues Asn-281 and Asn-305. Arg-330 is an active-site residue. N-linked (GlcNAc...) asparagine glycosylation occurs at Asn-374.

It belongs to the polysaccharide lyase 1 family. Ca(2+) serves as cofactor.

It carries out the reaction Eliminative cleavage of (1-&gt;4)-alpha-D-galacturonan to give oligosaccharides with 4-deoxy-alpha-D-galact-4-enuronosyl groups at their non-reducing ends.. It functions in the pathway glycan metabolism; pectin degradation; 2-dehydro-3-deoxy-D-gluconate from pectin: step 2/5. The chain is Probable pectate lyase 9 from Arabidopsis thaliana (Mouse-ear cress).